A 423-amino-acid chain; its full sequence is AP-1 complex subunit mu-1 (423 aa).

S2 is subject to N-acetylserine. Phosphothreonine occurs at positions 152, 154, and 223. The MHD domain maps to 168–421; the sequence is KNEVFLDVIE…ITQNGDYQLR (254 aa).

This sequence belongs to the adaptor complexes medium subunit family. As to quaternary structure, adaptor protein complex 1 (AP-1) is a heterotetramer composed of two large adaptins (gamma-type subunit AP1G1 and beta-type subunit AP1B1), a medium adaptin (mu-type subunit AP1M1 or AP1M2) and a small adaptin (sigma-type subunit AP1S1 or AP1S2 or AP1S3). Interacts with MARCHF11. Post-translationally, phosphorylation of membrane-bound AP1M1/AP1M2 increases its affinity for sorting signals.

It localises to the golgi apparatus. The protein resides in the cytoplasmic vesicle. The protein localises to the clathrin-coated vesicle membrane. Functionally, subunit of clathrin-associated adaptor protein complex 1 that plays a role in protein sorting in the trans-Golgi network (TGN) and endosomes. The AP complexes mediate the recruitment of clathrin to membranes and the recognition of sorting signals within the cytosolic tails of transmembrane cargo molecules. In Mus musculus (Mouse), this protein is AP-1 complex subunit mu-1 (Ap1m1).